We begin with the raw amino-acid sequence, 403 residues long: Blue light- and temperature-regulated antirepressor BluF (403 aa).

The BLUF domain occupies 2-93 (LTTLIYRSHI…ARRFGKAGME (92 aa)). A joining helix region spans residues 98–144 (RLHERDDVLQAVFDKGTSKFQLTYDDRALQFFRTFVLATEQSTYFEI). The 249-residue stretch at 155 to 403 (DGSDKELDSC…IPSIAWPEKK (249 aa)) folds into the EAL domain.

In terms of assembly, monomer, it undergoes transient dimerization following photoexcitation or upon temperature reduction, with a relaxation time of about 2 minutes. The dimer may be the inactive state. Interacts with the N- and C-terminal domains of BluR. Can also interact with the C-terminal domain of MlrA. Requires FAD as cofactor.

Binds to and releases the BluR repressor from its bound DNA target in a blue light-dependent (470 nm) fashion. A shift to low temperature also triggers a BluF-mediated relief of repression by BluR, suggesting BluF may serve as a thermometer. Blue light may act to increase the affinity of BluF for BluR, allowing it to be released from its operator. The protein has a reversible photocycle, and undergoes structural changes, probably in the EAL domain, in response to light. The protein is Blue light- and temperature-regulated antirepressor BluF of Escherichia coli (strain K12).